A 259-amino-acid polypeptide reads, in one-letter code: Flap endonuclease Xni (259 aa).

Aspartate 109 lines the Mg(2+) pocket. The 5'-3' exonuclease domain occupies 165–255; it reads VKPQQLSDYW…FNLQDLRFTA (91 aa). K(+) is bound by residues leucine 176, isoleucine 187, and isoleucine 190. The interaction with DNA stretch occupies residues 189–194; sequence GIGPKA.

Belongs to the Xni family. It depends on Mg(2+) as a cofactor. K(+) is required as a cofactor.

Its function is as follows. Has flap endonuclease activity. During DNA replication, flap endonucleases cleave the 5'-overhanging flap structure that is generated by displacement synthesis when DNA polymerase encounters the 5'-end of a downstream Okazaki fragment. This chain is Flap endonuclease Xni, found in Vibrio vulnificus (strain YJ016).